A 388-amino-acid polypeptide reads, in one-letter code: AT-rich binding protein (388 aa).

The segment at 29-52 (IVCHTCQEELQTQDQFWKHIQDEH) adopts a C2H2-type 1 zinc-finger fold. Composition is skewed to low complexity over residues 138 to 165 (QQHQQSQQQGHQQHQVQQQQTHQQLQQQ) and 249 to 265 (VSVSASTSTSNTVSTTP). 2 disordered regions span residues 138-168 (QQHQQSQQQGHQQHQVQQQQTHQQLQQQRDV) and 240-265 (PPPPPGSGFVSVSASTSTSNTVSTTP). C2H2-type zinc fingers lie at residues 321-345 (YVCDYETCGLKFKYKSRMELHRVVH) and 351-374 (FNCELCSASFKQSCNLSTHRKKKH).

Its subcellular location is the nucleus. Its function is as follows. May be a transcription factor for genes having (A+T) stretches in their promoter and/or enhancer regions. Binds to AT rich DNA. The protein is AT-rich binding protein of Drosophila melanogaster (Fruit fly).